The chain runs to 612 residues: Cryptochrome-2 (612 aa).

The interval 1-485 is CNT2, binds chromophores to sense blue light and mediate CRY dimerization; it reads MKMDKKTIVW…TARELLAKAI (485 aa). The Photolyase/cryptochrome alpha/beta domain maps to 5-134; the sequence is KKTIVWFRRD…SVQSYNGDLL (130 aa). Residue tyrosine 232 coordinates FAD. Asparagine 235 and serine 243 together coordinate Mg(2+). 244–248 contacts FAD; the sequence is TSLLS. A Mg(2+)-binding site is contributed by histidine 355. Residues asparagine 356 and 387 to 389 contribute to the FAD site; that span reads DAD. Position 356 to 357 (356 to 357) interacts with ATP; the sequence is NR. Residue aspartate 406 participates in ATP binding. A CCT2/CCE2, mediates blue light signaling region spans residues 486–612; sequence SRTREAQIMI…TTSLGKNGCK (127 aa). Residues 539-576 are disordered; that stretch reads GSKRVKPEEEEERDMKKSRGFDERELFSTAESSSSSSV. The Nuclear localization signal signature appears at 541-555; sequence KRVKPEEEEERDMKK. Residues 551 to 564 show a composition bias toward basic and acidic residues; sequence RDMKKSRGFDEREL. Position 587 is a phosphoserine; by CK1 (serine 587). Residues 590–612 are disordered; the sequence is KNLEGIQDSSDQITTSLGKNGCK. Positions 596–612 are enriched in polar residues; it reads QDSSDQITTSLGKNGCK. 2 positions are modified to phosphoserine: serine 598 and serine 599. Threonine 603 bears the Phosphothreonine; by CK1 mark. Serine 605 is subject to Phosphoserine.

It belongs to the DNA photolyase class-1 family. As to quaternary structure, homodimer. Blue-light dependent dimerization. Interacts with COP1 and PHYB in the nucleus. Binds reversibly to CIBs proteins such as BHLH63/CIB1, BHLH78/CIB2, BHLH74/CIB4 and BHLH76/CIB5 after blue light illumination to stimulate their transcription factor activities. Interacts with PIF4 and PIF5 in the nucleus in response to low blue light (LBL). Binds to SPA1 in response to blue light, this interaction prevents SPA1/COP1 complex formation but stimulates interaction with COP1, and thus avoid COP1-dependent degradation of the transcription factors CO and HY5 by the proteasome and promotes hypocotyl elongation and floral initiation. Binding to ATP mediates conformational changes which facilitate flavin binding. Interacts with BIC1 in both darkness and light. Interacts with NRP. The cofactor is FAD. Requires (6R)-5,10-methylene-5,6,7,8-tetrahydrofolate as cofactor. In terms of processing, phosphorylated by CK1.3 and CK1.4; in response to blue light. Required for degradation. Adopts an open conformation when phosphorylated upon photoexcitation and thus interacts with signaling partner proteins. Not autophosphorylated, even in complex with FAD cofactor. Post-translationally, ubiquitinated; in response to blue light. Mostly expressed in the shoot meristems and root tips, and, to a lower extent, in the cotyledons, hypocotyls, and roots.

The protein resides in the nucleus. It localises to the PML body. The protein localises to the cytoplasm. In terms of biological role, photoreceptor that mediates primarily blue light inhibition of hypocotyl elongation and photoperiodic control of floral initiation, and regulates other light responses, including circadian rhythms, tropic growth, stomata opening, guard cell development, root development, bacterial and viral pathogen responses, abiotic stress responses, cell cycles, programmed cell death, apical dominance, fruit and ovule development, seed dormancy, and magnetoreception. Photoexcited cryptochromes interact with signaling partner proteins to alter gene expression at both transcriptional and post-translational levels and, consequently, regulate the corresponding metabolic and developmental programs. Blue-light absorbing flavoprotein that activates reversible flavin photoreduction via an electron transport chain comprising a tryptophan triad (W-321, W-374 and W-397), or via an alternative electron transport that involves small metabolites, including NADPH, NADH, and ATP. The half-life of the activated signaling state is about 16 minutes. Perceives low blue light (LBL) and responds by directly contacting two bHLH transcription factors, PIF4 and PIF5, at chromatin on E-box variant 5'-CA[CT]GTG-3' to promote their activity and stimulate specific gene expression to adapt global physiology (e.g. hypocotyl elongation and hyponastic growth in low blue light). In response to blue light, binds to CIB proteins (e.g. BHLH63/CIB1 and BHLH76/CIB5) to activate transcription and floral initiation. Mediates blue light-induced gene expression, floral initiation and hypocotyl elongation through the interaction with SPA1 that prevents formation of SPA1/COP1 complex but stimulates COP1 binding, and thus inhibits COP1-mediated degradation of transcription factors (e.g. CO and HY5). Promotes flowering time in continuous light (LL). Involved in shortening the circadian clock period, especially at 27 degrees Celsius, in blue light (BL). Required to maintain clock genes expression rhythm. Triggers nuclear accumulation of ROS in response to blue light illumination. Involved in blue light-dependent stomatal opening, transpiration and inhibition of stem and root growth, probably by regulating abscisic acid (ABA). Regulates the timing of flowering by promoting the expression of 'FLOWERING LOCUS T' (FT) in vascular bundles. Negatively regulated by 'FLOWERING LOCUS C' (FLC). General positive regulator of reversible low light-induced chromatin decompaction. Involved in triggering chromatin decondensation during floral transition. Together with phototropins, involved in phototropism regulation by various blue light fluence; blue light attenuates phototropism in high fluence rates (100 umol.m-2.s-1) but enhances phototropism in low fluence rates (&lt;1.0 umol.m-2.s-1). The effect of near-null magnetic field on flowering is altered by changes of blue light cycle and intensity in a CRY1/CRY2-dependent manner. Involved in the strigolactone signaling that regulates hypocotyl growth in response to blue light. Functionally, confers resistance to turnip crinkle virus (TCV) by preventing COP1-mediated proteasome-mediated degradation of RPP8/HRT, thus promoting its stability in light. Exposure to darkness or blue-light induces degradation of CRY2, and in turn of RPP8/HRT, resulting in susceptibility to TCV. The chain is Cryptochrome-2 from Arabidopsis thaliana (Mouse-ear cress).